The chain runs to 433 residues: Serine--tRNA ligase (433 aa).

235–237 (TSE) provides a ligand contact to L-serine. 266–268 (RSE) provides a ligand contact to ATP. Glu-289 is a binding site for L-serine. 353 to 356 (EISS) is an ATP binding site. L-serine is bound at residue Ser-388.

It belongs to the class-II aminoacyl-tRNA synthetase family. Type-1 seryl-tRNA synthetase subfamily. Homodimer. The tRNA molecule binds across the dimer.

Its subcellular location is the cytoplasm. It catalyses the reaction tRNA(Ser) + L-serine + ATP = L-seryl-tRNA(Ser) + AMP + diphosphate + H(+). It carries out the reaction tRNA(Sec) + L-serine + ATP = L-seryl-tRNA(Sec) + AMP + diphosphate + H(+). The protein operates within aminoacyl-tRNA biosynthesis; selenocysteinyl-tRNA(Sec) biosynthesis; L-seryl-tRNA(Sec) from L-serine and tRNA(Sec): step 1/1. Catalyzes the attachment of serine to tRNA(Ser). Is also able to aminoacylate tRNA(Sec) with serine, to form the misacylated tRNA L-seryl-tRNA(Sec), which will be further converted into selenocysteinyl-tRNA(Sec). The polypeptide is Serine--tRNA ligase (Burkholderia cenocepacia (strain HI2424)).